The primary structure comprises 127 residues: Flagellar assembly factor FliW (127 aa).

This sequence belongs to the FliW family. In terms of assembly, interacts with translational regulator CsrA and flagellin(s).

The protein localises to the cytoplasm. Functionally, acts as an anti-CsrA protein, binds CsrA and prevents it from repressing translation of its target genes, one of which is flagellin. Binds to flagellin and participates in the assembly of the flagellum. This is Flagellar assembly factor FliW from Campylobacter concisus (strain 13826).